Here is a 133-residue protein sequence, read N- to C-terminus: ATP synthase epsilon chain (133 aa).

It belongs to the ATPase epsilon chain family. In terms of assembly, F-type ATPases have 2 components, CF(1) - the catalytic core - and CF(0) - the membrane proton channel. CF(1) has five subunits: alpha(3), beta(3), gamma(1), delta(1), epsilon(1). CF(0) has three main subunits: a, b and c.

It localises to the cell membrane. In terms of biological role, produces ATP from ADP in the presence of a proton gradient across the membrane. This is ATP synthase epsilon chain (atpC) from Mycoplasma pneumoniae (strain ATCC 29342 / M129 / Subtype 1) (Mycoplasmoides pneumoniae).